The chain runs to 459 residues: Glycosyl hydrolase family 109 protein (459 aa).

The segment at residues 1–31 is a signal peptide (tat-type signal); it reads MHNIHRRNFLKAAGAATAGLVTANIALSAYA. Residues 64–65, Asp-86, 135–138, 155–156, and Asn-184 contribute to the NAD(+) site; these read ER, WEWH, and EV. Substrate contacts are provided by residues Tyr-213, Arg-232, 244–247, and Tyr-326; that span reads YPTH. NAD(+) is bound at residue Tyr-244.

It belongs to the Gfo/Idh/MocA family. Glycosyl hydrolase 109 subfamily. It depends on NAD(+) as a cofactor. Post-translationally, predicted to be exported by the Tat system. The position of the signal peptide cleavage has not been experimentally proven.

Glycosidase. The protein is Glycosyl hydrolase family 109 protein of Shewanella baltica (strain OS185).